The chain runs to 336 residues: Terephthalate 1,2-dioxygenase, reductase component 1 (336 aa).

In terms of domain architecture, 2Fe-2S ferredoxin-type spans 3 to 91; sequence HQIHIHDSDI…DIRIQPSSFR (89 aa). [2Fe-2S] cluster is bound by residues Cys37, Cys42, Cys45, and Cys75. The region spanning 98 to 197 is the FAD-binding FR-type domain; the sequence is RKRFTAKVYS…ELPFGSIALK (100 aa).

In terms of assembly, monomer. Part of a multicomponent enzyme system composed of a reductase (TphA1I or TphA1II) and a two-subunit oxygenase component (TphA2I or TphA2II and TphA3I or TphA3II). It depends on FAD as a cofactor. Requires [2Fe-2S] cluster as cofactor.

The catalysed reaction is terephthalate + NADH + O2 + H(+) = (3S,4R)-3,4-dihydroxycyclohexa-1,5-diene-1,4-dicarboxylate + NAD(+). Component of the terephthalate 1,2-dioxygenase multicomponent enzyme system which catalyzes the dioxygenation of terephthalate (TER/TPA) to 1,2-dihydroxy-3,5-cyclohexadiene-1,4-dicarboxylic acid (DCD). TphA1 probably reduces TphA2A3. It can also use 2,5-dicarboxypyridine (PDC) and 1,4-napthalenedicarboxylic acid (NDC) as substrates, and preferentially uses NADPH which is the physiological electron donor. This chain is Terephthalate 1,2-dioxygenase, reductase component 1 (tphA1I), found in Comamonas sp.